Consider the following 321-residue polypeptide: Nucleotide-binding protein GOX0815 (321 aa).

Residue 27-34 (GLSGAGKS) participates in ATP binding. Position 72-75 (72-75 (DVRS)) interacts with GTP.

The protein belongs to the RapZ-like family.

Functionally, displays ATPase and GTPase activities. The polypeptide is Nucleotide-binding protein GOX0815 (Gluconobacter oxydans (strain 621H) (Gluconobacter suboxydans)).